The following is a 126-amino-acid chain: Methylglyoxal synthase (126 aa).

An MGS-like domain is found at 1-126 (MKALALIAHD…IAWIRKGTPQ (126 aa)). Residues histidine 9, lysine 13, 35–38 (TGTT), and 55–56 (SG) each bind substrate. Aspartate 61 serves as the catalytic Proton donor/acceptor. Histidine 88 lines the substrate pocket.

It belongs to the methylglyoxal synthase family.

It catalyses the reaction dihydroxyacetone phosphate = methylglyoxal + phosphate. Functionally, catalyzes the formation of methylglyoxal from dihydroxyacetone phosphate. The chain is Methylglyoxal synthase from Thermus thermophilus (strain ATCC BAA-163 / DSM 7039 / HB27).